The sequence spans 427 residues: 3-phosphoshikimate 1-carboxyvinyltransferase (427 aa).

Lysine 22, serine 23, and arginine 27 together coordinate 3-phosphoshikimate. Lysine 22 is a phosphoenolpyruvate binding site. Residues glycine 96 and arginine 124 each coordinate phosphoenolpyruvate. 3-phosphoshikimate contacts are provided by serine 169, serine 170, glutamine 171, serine 197, aspartate 313, asparagine 336, and lysine 340. A phosphoenolpyruvate-binding site is contributed by glutamine 171. Residue aspartate 313 is the Proton acceptor of the active site. Residues arginine 344, arginine 386, and lysine 411 each contribute to the phosphoenolpyruvate site.

Belongs to the EPSP synthase family. Monomer.

The protein resides in the cytoplasm. The catalysed reaction is 3-phosphoshikimate + phosphoenolpyruvate = 5-O-(1-carboxyvinyl)-3-phosphoshikimate + phosphate. The protein operates within metabolic intermediate biosynthesis; chorismate biosynthesis; chorismate from D-erythrose 4-phosphate and phosphoenolpyruvate: step 6/7. Catalyzes the transfer of the enolpyruvyl moiety of phosphoenolpyruvate (PEP) to the 5-hydroxyl of shikimate-3-phosphate (S3P) to produce enolpyruvyl shikimate-3-phosphate and inorganic phosphate. The chain is 3-phosphoshikimate 1-carboxyvinyltransferase from Escherichia coli O1:K1 / APEC.